Here is a 202-residue protein sequence, read N- to C-terminus: Ras-related protein Rab-2B (202 aa).

31–38 (GDSAVGKS) lines the GTP pocket. Residues 53–61 (SDFTIGVEF) carry the Effector region motif. GTP is bound by residues 79–83 (DTAGQ) and 137–140 (NKAD).

The protein belongs to the small GTPase superfamily. Rab family. This sequence lacks the C-terminal cysteine motifs subject to isoprenylation in other Rab proteins.

In Dictyostelium discoideum (Social amoeba), this protein is Ras-related protein Rab-2B (rab2B).